Reading from the N-terminus, the 489-residue chain is Glucose-1-phosphate adenylyltransferase small subunit, chloroplastic/amyloplastic (489 aa).

Residues 1–52 (ITVPSTSSKNLQNSLAFSSSSLSGDKIQTTSFLNRRYCRISSRAPIVVSPKA) constitute a chloroplast transit peptide.

It belongs to the bacterial/plant glucose-1-phosphate adenylyltransferase family. Heterotetramer. Prominently expressed in the leaves. A lower level expression is seen in the roots.

The protein resides in the plastid. It is found in the chloroplast. The protein localises to the amyloplast. The catalysed reaction is alpha-D-glucose 1-phosphate + ATP + H(+) = ADP-alpha-D-glucose + diphosphate. Its pathway is glycan biosynthesis; starch biosynthesis. With respect to regulation, activated by 3'phosphoglycerate, inhibited by orthophosphate. Allosteric regulation. Functionally, this protein plays a role in synthesis of starch. It catalyzes the synthesis of the activated glycosyl donor, ADP-glucose from Glc-1-P and ATP. The chain is Glucose-1-phosphate adenylyltransferase small subunit, chloroplastic/amyloplastic (AGPB1) from Beta vulgaris (Sugar beet).